Consider the following 374-residue polypeptide: Eukaryotic translation initiation factor 3 subunit M (374 aa).

One can recognise a PCI domain in the interval 180–339; that stretch reads TAAKVMVELL…RKVVVSHSTH (160 aa).

The protein belongs to the eIF-3 subunit M family. Component of the eukaryotic translation initiation factor 3 (eIF-3) complex, which is composed of 13 subunits: EIF3A, EIF3B, EIF3C, EIF3D, EIF3E, EIF3F, EIF3G, EIF3H, EIF3I, EIF3J, EIF3K, EIF3L and EIF3M.

The protein resides in the cytoplasm. Its function is as follows. Component of the eukaryotic translation initiation factor 3 (eIF-3) complex, which is involved in protein synthesis of a specialized repertoire of mRNAs and, together with other initiation factors, stimulates binding of mRNA and methionyl-tRNAi to the 40S ribosome. The eIF-3 complex specifically targets and initiates translation of a subset of mRNAs involved in cell proliferation. The sequence is that of Eukaryotic translation initiation factor 3 subunit M from Gallus gallus (Chicken).